The following is a 738-amino-acid chain: Pentatricopeptide repeat-containing protein At5g65570 (738 aa).

PPR repeat units follow at residues 98–128, 129–163, 164–198, 200–230, 231–265, 266–300, 301–331, 332–366, 367–401, 402–432, 433–467, 468–502, and 503–537; these read AEIS…MSER, HIVT…NVLP, DEYT…GLEV, NVFV…VEEK, DVVL…KVQP, NEYT…GFES, ALAS…IEYP, NQVS…SIKP, NSFT…GFDR, DKYA…LSEV, DVIS…GLQP, NDVT…KIML, and TNDH…DLVL. The interval 537–612 is type E motif; that stretch reads LWRTLLSACK…NPAMSWVEIN (76 aa). Positions 613–644 are type E(+) motif; sequence KETHTFMAGDLFSHPNSEQILENLEELIKKSK. The tract at residues 645 to 738 is type DYW motif; sequence DLGYVEDKSC…DGSCSCGDYW (94 aa).

Belongs to the PPR family. PCMP-H subfamily.

The chain is Pentatricopeptide repeat-containing protein At5g65570 (PCMP-H47) from Arabidopsis thaliana (Mouse-ear cress).